We begin with the raw amino-acid sequence, 214 residues long: Pyridoxine/pyridoxamine 5'-phosphate oxidase (214 aa).

Substrate is bound by residues 8–11 and lysine 66; that span reads RINY. FMN is bound by residues 61-66, 76-77, arginine 82, lysine 83, and glutamine 105; these read RIVLIK and FT. The substrate site is built by tyrosine 123, arginine 127, and serine 131. FMN-binding positions include 140–141 and tryptophan 184; that span reads QS. Residue 190 to 192 participates in substrate binding; that stretch reads RLH. Position 194 (arginine 194) interacts with FMN.

This sequence belongs to the pyridoxamine 5'-phosphate oxidase family. As to quaternary structure, homodimer. It depends on FMN as a cofactor.

It carries out the reaction pyridoxamine 5'-phosphate + O2 + H2O = pyridoxal 5'-phosphate + H2O2 + NH4(+). The catalysed reaction is pyridoxine 5'-phosphate + O2 = pyridoxal 5'-phosphate + H2O2. It participates in cofactor metabolism; pyridoxal 5'-phosphate salvage; pyridoxal 5'-phosphate from pyridoxamine 5'-phosphate: step 1/1. Its pathway is cofactor metabolism; pyridoxal 5'-phosphate salvage; pyridoxal 5'-phosphate from pyridoxine 5'-phosphate: step 1/1. In terms of biological role, catalyzes the oxidation of either pyridoxine 5'-phosphate (PNP) or pyridoxamine 5'-phosphate (PMP) into pyridoxal 5'-phosphate (PLP). The protein is Pyridoxine/pyridoxamine 5'-phosphate oxidase of Burkholderia cenocepacia (strain HI2424).